Here is a 145-residue protein sequence, read N- to C-terminus: MDIHQILKLLPHRYPILLVDRVLEIETGKRIKALKNVTINEPFFMGHFPKHPVMPGVLMIEAMAQAAALLSFSTLGVTPDDKTVYYFAGIDGARFKRPVGPGDQLIMDVELLRMKAGIFKFKGVCRVDENLACEAELMCTMRTVA.

The active site involves His-47.

Belongs to the thioester dehydratase family. FabZ subfamily.

It is found in the cytoplasm. The enzyme catalyses a (3R)-hydroxyacyl-[ACP] = a (2E)-enoyl-[ACP] + H2O. Its function is as follows. Involved in unsaturated fatty acids biosynthesis. Catalyzes the dehydration of short chain beta-hydroxyacyl-ACPs and long chain saturated and unsaturated beta-hydroxyacyl-ACPs. The sequence is that of 3-hydroxyacyl-[acyl-carrier-protein] dehydratase FabZ from Polaromonas naphthalenivorans (strain CJ2).